A 62-amino-acid chain; its full sequence is Keratin-associated protein 19-5 (62 aa).

A 14 X 2 AA repeats of G-[YCGS] region spans residues 5-56; the sequence is GSYYGGLGSGIRGFGNLGYGYGCGCGFGGYGYGSGYGRYGYGYPRPLYYGGY.

The protein belongs to the KRTAP type 19 family. As to quaternary structure, interacts with hair keratins. In terms of tissue distribution, expressed in skin during two hair growth cycles. Expression restricted to the cortical cells of hair follicles, appearing first in the cortical cells processing the flat nuclei located a few cells above the dermal papilla.

In terms of biological role, in the hair cortex, hair keratin intermediate filaments are embedded in an interfilamentous matrix, consisting of hair keratin-associated proteins (KRTAP), which are essential for the formation of a rigid and resistant hair shaft through their extensive disulfide bond cross-linking with abundant cysteine residues of hair keratins. The matrix proteins include the high-sulfur and high-glycine-tyrosine keratins. This chain is Keratin-associated protein 19-5 (Krtap19-5), found in Mus musculus (Mouse).